Consider the following 445-residue polypeptide: Glycerophosphocholine choline phosphodiesterase ENPP6 (445 aa).

The signal sequence occupies residues 1–22 (MAGKLGVLLLALVLSLAQPASA). Positions 32, 71, and 92 each coordinate substrate. D32 and S71 together coordinate Zn(2+). The Nucleophile role is filled by S71. S71 carries the phosphoserine modification. N-linked (GlcNAc...) asparagine glycosylation is found at N100 and N118. A disulfide bridge links C142 with C154. D193 provides a ligand contact to substrate. 4 residues coordinate Zn(2+): D193, H197, D240, and H241. H241 lines the substrate pocket. N341 carries N-linked (GlcNAc...) asparagine glycosylation. Position 356 (H356) interacts with substrate. Zn(2+) is bound at residue H356. N406 carries an N-linked (GlcNAc...) asparagine glycan. Residue S421 is the site of GPI-anchor amidated serine attachment. Residues 422–445 (SAPGAPPCACALVTVLLVLLAILA) constitute a propeptide, removed in mature form.

The protein belongs to the nucleotide pyrophosphatase/phosphodiesterase family. In terms of assembly, homodimer; disulfide-linked. Homotetramer. Zn(2+) serves as cofactor.

It localises to the cell membrane. It carries out the reaction sn-glycerol 3-phosphocholine + H2O = phosphocholine + glycerol + H(+). The enzyme catalyses a 1-acyl-sn-glycero-3-phosphocholine + H2O = a 1-acyl-sn-glycerol + phosphocholine + H(+). It catalyses the reaction a 1-O-alkyl-sn-glycero-3-phosphocholine + H2O = a 1-O-alkyl-sn-glycerol + phosphocholine + H(+). The catalysed reaction is 1-dodecanoyl-sn-glycero-3-phosphocholine + H2O = 1-dodecanoyl-sn-glycerol + phosphocholine + H(+). It carries out the reaction 1-hexadecanoyl-sn-glycero-3-phosphocholine + H2O = 1-hexadecanoyl-sn-glycerol + phosphocholine + H(+). The enzyme catalyses 1-(5Z,8Z,11Z,14Z-eicosatetraenoyl)-sn-glycero-3-phosphocholine + H2O = 1-(5Z,8Z,11Z,14Z-eicosatetraenoyl)-sn-glycerol + phosphocholine + H(+). It catalyses the reaction 1-tetradecanoyl-sn-glycero-3-phosphocholine + H2O = 1-tetradecanoyl-sn-glycerol + phosphocholine + H(+). The catalysed reaction is sphing-4-enine-phosphocholine + H2O = sphing-4-enine + phosphocholine + H(+). It carries out the reaction 1-(9Z-octadecenoyl)-sn-glycero-3-phosphocholine + H2O = 1-(9Z-octadecenoyl)-sn-glycerol + phosphocholine + H(+). The enzyme catalyses 1-(9Z,12Z)-octadecadienoyl-sn-glycero-3-phosphocholine + H2O = 1-(9Z,12Z-octadecadienoyl)-sn-glycerol + phosphocholine + H(+). It catalyses the reaction glycero-2-phosphocholine + H2O = phosphocholine + glycerol + H(+). With respect to regulation, inhibited by EDTA and EGTA in vitro. Choline-specific glycerophosphodiesterase that hydrolyzes glycerophosphocholine (GPC) and lysophosphatidylcholine (LPC) and contributes to supplying choline to the cells. Has a preference for LPC with short (12:0 and 14:0) or polyunsaturated (18:2 and 20:4) fatty acids. In vitro, hydrolyzes only choline-containing lysophospholipids, such as sphingosylphosphorylcholine (SPC), platelet-activating factor (PAF) and lysoPAF, but not other lysophospholipids. The polypeptide is Glycerophosphocholine choline phosphodiesterase ENPP6 (Bos taurus (Bovine)).